The following is a 596-amino-acid chain: Probable protein S-acyltransferase 22 (596 aa).

2 consecutive transmembrane segments (helical) span residues 15-35 (VVAV…FAPF) and 44-64 (IAMG…IWCA). The segment at 102-125 (TGGAKSHDGTCVEDTENGSNKKLE) is disordered. In terms of domain architecture, DHHC spans 163-213 (FYCSLCEVEVFKYSKHCRVCDKCVDRFDHHCRWLNNCIGKRNYRKFFSLMV). C193 (S-palmitoyl cysteine intermediate) is an active-site residue. 2 helical membrane-spanning segments follow: residues 215–235 (AIFL…LCLL) and 254–274 (LIPF…ATLP). Disordered stretches follow at residues 433 to 455 (SGRR…RRQS), 498 to 523 (QTSR…DSHD), and 549 to 596 (MGQQ…HKSR). Positions 498–518 (QTSRAMSGSGNVMVTSSPESS) are enriched in polar residues. The segment covering 549–571 (MGQQRGQQQQQQLSMMMMPLSRS) has biased composition (low complexity).

Belongs to the DHHC palmitoyltransferase family.

The protein resides in the cell membrane. It localises to the cytoplasmic vesicle membrane. The catalysed reaction is L-cysteinyl-[protein] + hexadecanoyl-CoA = S-hexadecanoyl-L-cysteinyl-[protein] + CoA. Its function is as follows. Palmitoyl acyltransferase. The protein is Probable protein S-acyltransferase 22 (PAT22) of Arabidopsis thaliana (Mouse-ear cress).